The following is a 342-amino-acid chain: Holliday junction branch migration complex subunit RuvB (342 aa).

Residues 1–179 (MTNILSPEKS…FGIPMRLNFY (179 aa)) form a large ATPase domain (RuvB-L) region. Residues isoleucine 18, arginine 19, glycine 60, lysine 63, threonine 64, threonine 65, 126-128 (EDF), arginine 169, tyrosine 179, and arginine 216 contribute to the ATP site. Threonine 64 provides a ligand contact to Mg(2+). The interval 180 to 250 (NTEELKKVLN…VSDFGLNRLE (71 aa)) is small ATPAse domain (RuvB-S). Residues 253–342 (RIGLDSNDYR…HQFNIFNENE (90 aa)) are head domain (RuvB-H). Residues arginine 289, arginine 308, and arginine 313 each contribute to the DNA site.

Belongs to the RuvB family. In terms of assembly, homohexamer. Forms an RuvA(8)-RuvB(12)-Holliday junction (HJ) complex. HJ DNA is sandwiched between 2 RuvA tetramers; dsDNA enters through RuvA and exits via RuvB. An RuvB hexamer assembles on each DNA strand where it exits the tetramer. Each RuvB hexamer is contacted by two RuvA subunits (via domain III) on 2 adjacent RuvB subunits; this complex drives branch migration. In the full resolvosome a probable DNA-RuvA(4)-RuvB(12)-RuvC(2) complex forms which resolves the HJ.

It is found in the cytoplasm. The catalysed reaction is ATP + H2O = ADP + phosphate + H(+). The RuvA-RuvB-RuvC complex processes Holliday junction (HJ) DNA during genetic recombination and DNA repair, while the RuvA-RuvB complex plays an important role in the rescue of blocked DNA replication forks via replication fork reversal (RFR). RuvA specifically binds to HJ cruciform DNA, conferring on it an open structure. The RuvB hexamer acts as an ATP-dependent pump, pulling dsDNA into and through the RuvAB complex. RuvB forms 2 homohexamers on either side of HJ DNA bound by 1 or 2 RuvA tetramers; 4 subunits per hexamer contact DNA at a time. Coordinated motions by a converter formed by DNA-disengaged RuvB subunits stimulates ATP hydrolysis and nucleotide exchange. Immobilization of the converter enables RuvB to convert the ATP-contained energy into a lever motion, pulling 2 nucleotides of DNA out of the RuvA tetramer per ATP hydrolyzed, thus driving DNA branch migration. The RuvB motors rotate together with the DNA substrate, which together with the progressing nucleotide cycle form the mechanistic basis for DNA recombination by continuous HJ branch migration. Branch migration allows RuvC to scan DNA until it finds its consensus sequence, where it cleaves and resolves cruciform DNA. This chain is Holliday junction branch migration complex subunit RuvB, found in Rickettsia rickettsii (strain Sheila Smith).